Consider the following 362-residue polypeptide: Phosphoglycolate phosphatase 1B, chloroplastic (362 aa).

The transit peptide at 1 to 54 (MLSRSVASAVTPVSSSSLLPNSKPIFCLKTLSGYRSSSFCGGCIRKINHKPLRM) directs the protein to the chloroplast. An N-acetylthreonine modification is found at Thr-55. Glu-80 acts as the Nucleophile in catalysis. Position 356 is a phosphoserine (Ser-356).

This sequence belongs to the HAD-like hydrolase superfamily. CbbY/CbbZ/Gph/YieH family.

The protein localises to the plastid. It localises to the chloroplast. It carries out the reaction 2-phosphoglycolate + H2O = glycolate + phosphate. Photorespiratory enzyme that dephosphorylates the 2-phosphoglycolate produced by the RuBisCO oxygenation reaction. The chain is Phosphoglycolate phosphatase 1B, chloroplastic (PGLP1B) from Arabidopsis thaliana (Mouse-ear cress).